The primary structure comprises 232 residues: uncharacterized protein (232 aa).

Residues 89–140 (EFGTWQRRKNSLEDSLREVMKRRGELQDQLTAELGAIERMQTDLVGARQTLD) adopt a coiled-coil conformation.

This is an uncharacterized protein from Mycobacterium leprae (strain TN).